Reading from the N-terminus, the 92-residue chain is MLRETSEGVILSVIVAPNARETKIVGIDGTRGRVKVNVAAPPVKGKANKELMKFFKKLFGAEVVIVRGETSREKDLLIKGITKKEVIEKLEL.

The protein belongs to the UPF0235 family.

This is UPF0235 protein PF1765 from Pyrococcus furiosus (strain ATCC 43587 / DSM 3638 / JCM 8422 / Vc1).